The chain runs to 128 residues: Large ribosomal subunit protein bL12 (128 aa).

This sequence belongs to the bacterial ribosomal protein bL12 family. Homodimer. Part of the ribosomal stalk of the 50S ribosomal subunit. Forms a multimeric L10(L12)X complex, where L10 forms an elongated spine to which 2 to 4 L12 dimers bind in a sequential fashion. Binds GTP-bound translation factors.

In terms of biological role, forms part of the ribosomal stalk which helps the ribosome interact with GTP-bound translation factors. Is thus essential for accurate translation. This Thermosipho africanus (strain TCF52B) protein is Large ribosomal subunit protein bL12.